The primary structure comprises 1357 residues: DNA-directed RNA polymerase subunit beta (1357 aa).

It belongs to the RNA polymerase beta chain family. As to quaternary structure, the RNAP catalytic core consists of 2 alpha, 1 beta, 1 beta' and 1 omega subunit. When a sigma factor is associated with the core the holoenzyme is formed, which can initiate transcription.

The catalysed reaction is RNA(n) + a ribonucleoside 5'-triphosphate = RNA(n+1) + diphosphate. DNA-dependent RNA polymerase catalyzes the transcription of DNA into RNA using the four ribonucleoside triphosphates as substrates. The protein is DNA-directed RNA polymerase subunit beta of Pseudomonas entomophila (strain L48).